The chain runs to 333 residues: Cytochrome f (333 aa).

Residues 1–37 form the signal peptide; sequence MRNSCKKARRTRPLKATIQALLVAIATMTFFFTSDIA. Residues 38-298 are Cytoplasmic-facing; it reads LPQSAAAYPF…TEIVLQDPNR (261 aa). Residues Tyr-45, Cys-66, Cys-69, and His-70 each coordinate heme. A helical membrane pass occupies residues 299–319; sequence VKWMIAFICLVMLAQLMLILK. Over 320-333 the chain is Lumenal, thylakoid; the sequence is KKQVEKVQAAEMNF.

It belongs to the cytochrome f family. The 4 large subunits of the cytochrome b6-f complex are cytochrome b6, subunit IV (17 kDa polypeptide, PetD), cytochrome f and the Rieske protein, while the 4 small subunits are PetG, PetL, PetM and PetN. The complex functions as a dimer. Requires heme as cofactor.

The protein localises to the cellular thylakoid membrane. In terms of biological role, component of the cytochrome b6-f complex, which mediates electron transfer between photosystem II (PSII) and photosystem I (PSI), cyclic electron flow around PSI, and state transitions. The chain is Cytochrome f (petA) from Mastigocladus laminosus (Fischerella sp.).